The chain runs to 936 residues: Isoleucine--tRNA ligase (936 aa).

The 'HIGH' region signature appears at 58 to 68 (PYANGRAHLGT). L-isoleucyl-5'-AMP is bound at residue E561. Positions 602–606 (KMSKS) match the 'KMSKS' region motif. K605 provides a ligand contact to ATP. The Zn(2+) site is built by C899, C902, C919, and C922.

This sequence belongs to the class-I aminoacyl-tRNA synthetase family. IleS type 1 subfamily. In terms of assembly, monomer. Zn(2+) serves as cofactor.

It localises to the cytoplasm. It carries out the reaction tRNA(Ile) + L-isoleucine + ATP = L-isoleucyl-tRNA(Ile) + AMP + diphosphate. Catalyzes the attachment of isoleucine to tRNA(Ile). As IleRS can inadvertently accommodate and process structurally similar amino acids such as valine, to avoid such errors it has two additional distinct tRNA(Ile)-dependent editing activities. One activity is designated as 'pretransfer' editing and involves the hydrolysis of activated Val-AMP. The other activity is designated 'posttransfer' editing and involves deacylation of mischarged Val-tRNA(Ile). This is Isoleucine--tRNA ligase from Coxiella burnetii (strain Dugway 5J108-111).